A 337-amino-acid chain; its full sequence is Adenosine deaminase (337 aa).

Zn(2+) contacts are provided by His-15 and His-17. Positions 17, 19, and 172 each coordinate substrate. Position 199 (His-199) interacts with Zn(2+). Glu-202 (proton donor) is an active-site residue. Asp-279 is a binding site for Zn(2+).

It belongs to the metallo-dependent hydrolases superfamily. Adenosine and AMP deaminases family. Adenosine deaminase subfamily. The cofactor is Zn(2+).

The catalysed reaction is adenosine + H2O + H(+) = inosine + NH4(+). The enzyme catalyses 2'-deoxyadenosine + H2O + H(+) = 2'-deoxyinosine + NH4(+). Functionally, catalyzes the hydrolytic deamination of adenosine and 2-deoxyadenosine. This Enterococcus faecalis (strain ATCC 700802 / V583) protein is Adenosine deaminase.